A 312-amino-acid polypeptide reads, in one-letter code: Small kinetochore-associated protein (312 aa).

Positions 1-13 (MATHKAEAQETDF) are enriched in basic and acidic residues. Disordered regions lie at residues 1–32 (MATH…PSSR), 55–176 (LKRS…KDKN), and 221–242 (KGLN…DPTD). The span at 75–84 (RPTTMASSKT) shows a compositional bias: polar residues. 2 stretches are compositionally biased toward basic and acidic residues: residues 131-143 (DVTK…RENG) and 166-176 (QKPEEDLKDKN). The segment at 156-312 (IRSSYKPLSK…LEEMEQLLEM (157 aa)) is interaction with SPAG5. Residues 169–210 (EEDLKDKNELLEAVNKQLHQKLTETQGELKDLTQKVELLEKF) are a coiled coil. The stretch at 246 to 288 (LLETLKDELKLFNETAKKQMEELQALKVKLKLKEKERIQFLEQ) forms a coiled coil.

Part of an astrin (SPAG5)-kinastrin (SKAP) complex containing KNSTRN, SPAG5, PLK1, DYNLL1 and SGO2. Interacts with SPAG5. Directly binds to microtubules, although at relatively low affinity. Interacts with CENPE; this interaction greatly favors microtubule-binding. Interacts with DSN1/MIS13; leading to localization to kinetochores. Interacts with MAPRE1/EB1; leading to localization to the microtubule plus ends. Interacts with PRPF19. Interacts with DYNLL1. Interacts with MAP4.

It is found in the nucleus. The protein resides in the chromosome. Its subcellular location is the centromere. It localises to the kinetochore. The protein localises to the cytoplasm. It is found in the cytoskeleton. The protein resides in the spindle pole. Its subcellular location is the microtubule organizing center. Its function is as follows. Essential component of the mitotic spindle required for faithful chromosome segregation and progression into anaphase. Promotes the metaphase-to-anaphase transition and is required for chromosome alignment, normal timing of sister chromatid segregation, and maintenance of spindle pole architecture. The astrin (SPAG5)-kinastrin (SKAP) complex promotes stable microtubule-kinetochore attachments. Required for kinetochore oscillations and dynamics of microtubule plus-ends during live cell mitosis, possibly by forming a link between spindle microtubule plus-ends and mitotic chromosomes to achieve faithful cell division. This Rattus norvegicus (Rat) protein is Small kinetochore-associated protein (Knstrn).